The chain runs to 943 residues: Translation initiation factor IF-2 (943 aa).

The segment at 35–359 is disordered; sequence MSSIDQDQEA…MPQRKERPLP (325 aa). The span at 57 to 76 shows a compositional bias: low complexity; sequence KAPSSQAAKTPAKAAKTSSA. Composition is skewed to basic and acidic residues over residues 92-103 and 110-124; these read SNDHADAAEHSQ and AKQENKPARSNKTSD. The segment covering 130-141 has biased composition (polar residues); the sequence is SKSTILRPRSTQ. A compositionally biased stretch (low complexity) spans 142 to 190; it reads TAHTNTNHNRGGNTASANNTANGRNSNRSNNNNNNRSANNANRSGNNNR. Basic and acidic residues-rich tracts occupy residues 191 to 205, 239 to 250, and 259 to 271; these read SNERNRNDRNRRFDN, ASERQQPKRQEA, and KRSEQPRTERPRT. 2 stretches are compositionally biased toward low complexity: residues 289-299 and 315-330; these read PAAAAPKPASA and NFGRSNSYGNRNGFNR. Residues 331 to 342 are compositionally biased toward basic residues; sequence NNRRNKKNKRRQ. A compositionally biased stretch (basic and acidic residues) spans 346 to 358; sequence PKKEMPQRKERPL. The tr-type G domain maps to 444–613; that stretch reads PRPPVVTIMG…LLEADVLELK (170 aa). Residues 453–460 are G1; sequence GHVDHGKT. Position 453–460 (453–460) interacts with GTP; the sequence is GHVDHGKT. Residues 478-482 form a G2 region; it reads GITQH. Positions 499-502 are G3; the sequence is DTPG. Residues 499–503 and 553–556 contribute to the GTP site; these read DTPGH and NKID. Positions 553–556 are G4; it reads NKID. Residues 589-591 are G5; sequence SAK.

The protein belongs to the TRAFAC class translation factor GTPase superfamily. Classic translation factor GTPase family. IF-2 subfamily.

It localises to the cytoplasm. One of the essential components for the initiation of protein synthesis. Protects formylmethionyl-tRNA from spontaneous hydrolysis and promotes its binding to the 30S ribosomal subunits. Also involved in the hydrolysis of GTP during the formation of the 70S ribosomal complex. The sequence is that of Translation initiation factor IF-2 from Lacticaseibacillus paracasei (strain ATCC 334 / BCRC 17002 / CCUG 31169 / CIP 107868 / KCTC 3260 / NRRL B-441) (Lactobacillus paracasei).